The chain runs to 476 residues: Neuropeptide receptor 18 (476 aa).

Over 1–61 the chain is Extracellular; that stretch reads MSSFYNEAKF…LSNHDNSSLM (61 aa). N-linked (GlcNAc...) asparagine glycans are attached at residues N43 and N57. A helical membrane pass occupies residues 62 to 82; sequence LIAGFYALLFMFGTCGNAAIL. At 83–102 the chain is on the cytoplasmic side; it reads AVVHHVKGQDPRSRHNTTLT. The helical transmembrane segment at 103-123 threads the bilayer; it reads YICILSIVDFLSMLPIPMTII. Over 124–139 the chain is Extracellular; the sequence is DQILGFWMFDTFACKL. The cysteines at positions 137 and 228 are disulfide-linked. The helical transmembrane segment at 140–160 threads the bilayer; it reads FRLLEHIGKIFSTFILVAFSI. Residues 161 to 179 are Cytoplasmic-facing; the sequence is DRYCAVCHPLQVRVRNQRT. The helical transmembrane segment at 180 to 200 threads the bilayer; it reads VFVFLGIMFFVTCVMLSPILL. Residues 201–236 are Extracellular-facing; it reads YAHSKELVMHEKVDLDQEVITRMHLYKCVDDLGREL. Residues 237–257 form a helical membrane-spanning segment; sequence FVVFTLYSFVLAYLMPLLFMI. At 258–291 the chain is on the cytoplasmic side; it reads YFYYEMLIRLFKQANVIKQTLVGRRSGGEEKKLT. The chain crosses the membrane as a helical span at residues 292 to 312; sequence IPVGHIAIYTLAICSFHFICW. At 313-334 the chain is on the extracellular side; that stretch reads TPYWISILYSLYEELYQDTKST. Residues 335–355 form a helical membrane-spanning segment; that stretch reads ASPPTYAFIYFMYGVHALPYI. The Cytoplasmic segment spans residues 356 to 476; it reads NSASNFILYG…ITPDTESVIL (121 aa).

This sequence belongs to the G-protein coupled receptor 1 family. In terms of tissue distribution, expressed in sensory neurons including ASER.

It localises to the cell membrane. In terms of biological role, probable receptor for neuropeptide ligand nlp-9 that plays a role in octopamine signaling and specifically, the octapamine inhibition of aversion responses in olfactory sensory neurons. In AWB olfactory sensory neurons, required for the detection of preferred food sources. In Caenorhabditis elegans, this protein is Neuropeptide receptor 18.